The sequence spans 190 residues: MGLLDAKISNHNVLVTSVDNVLNWARLSSLWPMGFGLACCAIEMMATNASNYDLERFGIFPRSSPRQSDLMIVAGTVTMKMAERVIRLYEQMPEPRYVLSMGSCSNCGGPYWKHGYHVLKGVDRIIPVDVYVPGCPPRPEALIGGLMKVQELIRMEQIGISRVEALKKLEEKNIDPGQLIEDARKGAMAS.

Cysteine 39, cysteine 40, cysteine 104, and cysteine 135 together coordinate [4Fe-4S] cluster.

The protein belongs to the complex I 20 kDa subunit family. In terms of assembly, NDH-1 is composed of 14 different subunits. Subunits NuoB, C, D, E, F, and G constitute the peripheral sector of the complex. Requires [4Fe-4S] cluster as cofactor.

The protein localises to the cell inner membrane. It carries out the reaction a quinone + NADH + 5 H(+)(in) = a quinol + NAD(+) + 4 H(+)(out). Its function is as follows. NDH-1 shuttles electrons from NADH, via FMN and iron-sulfur (Fe-S) centers, to quinones in the respiratory chain. The immediate electron acceptor for the enzyme in this species is believed to be a menaquinone. Couples the redox reaction to proton translocation (for every two electrons transferred, four hydrogen ions are translocated across the cytoplasmic membrane), and thus conserves the redox energy in a proton gradient. In Chlorobium phaeobacteroides (strain BS1), this protein is NADH-quinone oxidoreductase subunit B.